The primary structure comprises 402 residues: Mannonate dehydratase (402 aa).

The protein belongs to the mannonate dehydratase family. Requires Fe(2+) as cofactor. Mn(2+) is required as a cofactor.

It carries out the reaction D-mannonate = 2-dehydro-3-deoxy-D-gluconate + H2O. Its pathway is carbohydrate metabolism; pentose and glucuronate interconversion. Functionally, catalyzes the dehydration of D-mannonate. The polypeptide is Mannonate dehydratase (Rhizobium meliloti (strain 1021) (Ensifer meliloti)).